The chain runs to 126 residues: Type II methyltransferase M.HgiGI (126 aa).

The region spanning 1-126 (MKTIDLFAGC…ARLSKIHQQA (126 aa)) is the SAM-dependent MTase C5-type domain. Cys75 is an active-site residue.

This sequence belongs to the class I-like SAM-binding methyltransferase superfamily. C5-methyltransferase family.

The catalysed reaction is a 2'-deoxycytidine in DNA + S-adenosyl-L-methionine = a 5-methyl-2'-deoxycytidine in DNA + S-adenosyl-L-homocysteine + H(+). Functionally, a methylase, recognizes the double-stranded sequence 5'-GRCGYC-3', methylates C-? on both strands, and protects the DNA from cleavage by the HgiEI endonuclease. The sequence is that of Type II methyltransferase M.HgiGI from Herpetosiphon aurantiacus (Herpetosiphon giganteus).